The chain runs to 467 residues: Coiled-coil domain-containing protein 174 (467 aa).

2 disordered regions span residues 40 to 77 and 124 to 162; these read VFGKPKTTNKKPSIWSKQNVGVSNRAEKDAEQKIEEQK and EMEASGAHRDSQKAGERDDDEENLPEGEIPPPQDPSEEW. A coiled-coil region spans residues 63-99; sequence NRAEKDAEQKIEEQKTLDKAREKLEEKAKLYEKMTKG. 2 stretches are compositionally biased toward basic and acidic residues: residues 64-77 and 124-139; these read RAEKDAEQKIEEQK and EMEASGAHRDSQKAGE. Serine 197 carries the phosphoserine modification. A coiled-coil region spans residues 267–309; sequence LEMLREQTTDQRTKRENIKEKRKAILEARLAKLRQKKMKKSKE. 2 disordered regions span residues 299 to 363 and 378 to 453; these read LRQK…HIRE and RQSD…TVTF. A compositionally biased stretch (pro residues) spans 324–336; it reads PLPPEPEAVPTPR. Composition is skewed to basic and acidic residues over residues 348–363 and 378–389; these read VQERKDTKPGVPHIRE and RQSDLRAERDPE. Residues 425-437 are compositionally biased toward polar residues; the sequence is PDQSHGPSPEHTS. Pro residues predominate over residues 439–448; that stretch reads TPAPDNPPQA.

In terms of tissue distribution, widely expressed.

The protein resides in the nucleus. In terms of biological role, probably involved in neuronal development. The chain is Coiled-coil domain-containing protein 174 (CCDC174) from Homo sapiens (Human).